The sequence spans 282 residues: MKVISSIQELRDQLRGQNRAAFVPTMGNLHEGHLSLMRLARQHGDPVVASIFVNRLQFGPNEDFDKYPRTLQDDIEKLQKEGVYVLFAPSERDMYPEPQEYRVEPPHDLGDILEGEFRPGFFKGVCTVVMKLFSCAQPRVAVFGKKDYQQLMIVRRMVQQFALPIDIIPAETIRAEDGLALSSRNRYLSPDERAEAPVLYRTLHDVRDTVLGSDRASADLLAVEANAKESLARRGWKPDYVSIRKRVDLQAPTREEFLAGEPLVILTAAKLGATRLIDNLEI.

ATP is bound at residue 26 to 33; sequence MGNLHEGH. H33 functions as the Proton donor in the catalytic mechanism. Q57 contacts (R)-pantoate. Q57 lines the beta-alanine pocket. 144–147 is an ATP binding site; the sequence is GKKD. Q150 provides a ligand contact to (R)-pantoate. ATP-binding positions include I173 and 181–184; that span reads LSSR.

The protein belongs to the pantothenate synthetase family. In terms of assembly, homodimer.

Its subcellular location is the cytoplasm. It carries out the reaction (R)-pantoate + beta-alanine + ATP = (R)-pantothenate + AMP + diphosphate + H(+). It participates in cofactor biosynthesis; (R)-pantothenate biosynthesis; (R)-pantothenate from (R)-pantoate and beta-alanine: step 1/1. Catalyzes the condensation of pantoate with beta-alanine in an ATP-dependent reaction via a pantoyl-adenylate intermediate. The protein is Pantothenate synthetase of Cupriavidus necator (strain ATCC 17699 / DSM 428 / KCTC 22496 / NCIMB 10442 / H16 / Stanier 337) (Ralstonia eutropha).